The sequence spans 258 residues: Spindlin-2A (258 aa).

Low complexity predominate over residues 1-23; it reads MKTPNAQEAEGQQTRAAAGRATG. The interval 1-49 is disordered; it reads MKTPNAQEAEGQQTRAAAGRATGSANMTKKKVSQKKQRGRPSSQPRRNI. The segment covering 28 to 39 has biased composition (basic residues); that stretch reads TKKKVSQKKQRG. Tudor-like domain regions lie at residues 50–99, 129–178, and 210–255; these read VGCR…LELH, IGKA…YQLL, and IGKH…YDLV. Histone H3K4me3 and H3R8me2a binding regions lie at residues Glu-138 and 246–248; that span reads DFH.

The protein belongs to the SPIN/STSY family. In terms of assembly, interacts with C11orf84/SPINDOC.

The protein localises to the nucleus. May be involved in the regulation of cell cycle progression. Exhibits H3K4me3-binding activity. This Homo sapiens (Human) protein is Spindlin-2A (SPIN2A).